The following is a 190-amino-acid chain: MGQVAFDALQASEELESAGISREKARAISLVVRKSHDVANVATKADIAEVKRDIADVRKDLSAEIADVRKDLSAEIADVRKDLSAEIADVRKDLSAEIADVRKDLSAEIADVRKDMAIRFEKTDAQIADVRKDMVNLFDKTDAQISLVRKDLQLEMSGIRAEQKLIRWMLGAGILGILSLVVKAFLMPAL.

The chain is Putative protein p47 (47) from Escherichia coli (Bacteriophage APSE-1).